A 76-amino-acid polypeptide reads, in one-letter code: MDILKKSLFIVLFLGLVSLSICEEEKRENEDEEEQEDDEQSEEKRGLWKSLLKNVGVAAGKAALNAVTDMVNQGEQ.

Residues M1–C22 form the signal peptide. Positions E23–R45 are excised as a propeptide. Residues E25 to K44 are disordered. Over residues E30 to S41 the composition is skewed to acidic residues. Residue Q73 is modified to Glutamine amide. The propeptide occupies E75–Q76.

Expressed by the skin glands.

The protein localises to the secreted. In terms of biological role, has antimicrobial activity. The protein is Dermaseptin-H1 of Pithecopus hypochondrialis (Orange-legged leaf frog).